The primary structure comprises 104 residues: Phosphate metabolism protein 6 (104 aa).

Residues 76 to 96 (IIVIIIVLLLYSLTMVGLFYV) form a helical membrane-spanning segment.

The protein resides in the vacuole membrane. The polypeptide is Phosphate metabolism protein 6 (PHM6) (Saccharomyces cerevisiae (strain ATCC 204508 / S288c) (Baker's yeast)).